The following is a 247-amino-acid chain: Probable transcriptional regulatory protein Glov_1245 (247 aa).

Belongs to the TACO1 family.

The protein localises to the cytoplasm. The protein is Probable transcriptional regulatory protein Glov_1245 of Trichlorobacter lovleyi (strain ATCC BAA-1151 / DSM 17278 / SZ) (Geobacter lovleyi).